The following is a 470-amino-acid chain: 6-phospho-beta-galactosidase (470 aa).

Residues Gln19, His116, Asn159, Glu160, and Asn297 each coordinate D-galactose 6-phosphate. The active-site Proton donor is Glu160. The active-site Nucleophile is the Glu375. Ser430, Trp431, Lys437, and Tyr439 together coordinate D-galactose 6-phosphate.

The protein belongs to the glycosyl hydrolase 1 family.

The enzyme catalyses a 6-phospho-beta-D-galactoside + H2O = D-galactose 6-phosphate + an alcohol. Its pathway is carbohydrate metabolism; lactose degradation; D-galactose 6-phosphate and beta-D-glucose from lactose 6-phosphate: step 1/1. This chain is 6-phospho-beta-galactosidase, found in Staphylococcus epidermidis (strain ATCC 35984 / DSM 28319 / BCRC 17069 / CCUG 31568 / BM 3577 / RP62A).